The sequence spans 159 residues: tRNA-specific adenosine deaminase (159 aa).

The CMP/dCMP-type deaminase domain occupies 6–133 (EEQTYFMQEA…ERLNHRVQVE (128 aa)). Residue His57 coordinates Zn(2+). Glu59 functions as the Proton donor in the catalytic mechanism. Zn(2+) contacts are provided by Cys87 and Cys90.

Belongs to the cytidine and deoxycytidylate deaminase family. In terms of assembly, homodimer. Zn(2+) serves as cofactor.

It catalyses the reaction adenosine(34) in tRNA + H2O + H(+) = inosine(34) in tRNA + NH4(+). Its function is as follows. Catalyzes the deamination of adenosine to inosine at the wobble position 34 of tRNA(Arg2). The chain is tRNA-specific adenosine deaminase from Streptococcus pyogenes serotype M18 (strain MGAS8232).